The following is a 492-amino-acid chain: 3-octaprenyl-4-hydroxybenzoate carboxy-lyase (492 aa).

Residue Asn172 participates in Mn(2+) binding. Residues 175-177 (IYR), 189-191 (RWL), and 194-195 (RG) each bind prenylated FMN. Glu238 is a binding site for Mn(2+). Catalysis depends on Asp287, which acts as the Proton donor.

It belongs to the UbiD family. As to quaternary structure, homohexamer. Prenylated FMN serves as cofactor. Mn(2+) is required as a cofactor.

It localises to the cell membrane. It catalyses the reaction a 4-hydroxy-3-(all-trans-polyprenyl)benzoate + H(+) = a 2-(all-trans-polyprenyl)phenol + CO2. It functions in the pathway cofactor biosynthesis; ubiquinone biosynthesis. Its function is as follows. Catalyzes the decarboxylation of 3-octaprenyl-4-hydroxy benzoate to 2-octaprenylphenol, an intermediate step in ubiquinone biosynthesis. The sequence is that of 3-octaprenyl-4-hydroxybenzoate carboxy-lyase from Pasteurella multocida (strain Pm70).